The primary structure comprises 573 residues: 2-succinyl-5-enolpyruvyl-6-hydroxy-3-cyclohexene-1-carboxylate synthase (573 aa).

It belongs to the TPP enzyme family. MenD subfamily. In terms of assembly, homodimer. Mg(2+) is required as a cofactor. Mn(2+) serves as cofactor. It depends on thiamine diphosphate as a cofactor.

It carries out the reaction isochorismate + 2-oxoglutarate + H(+) = 5-enolpyruvoyl-6-hydroxy-2-succinyl-cyclohex-3-ene-1-carboxylate + CO2. It participates in quinol/quinone metabolism; 1,4-dihydroxy-2-naphthoate biosynthesis; 1,4-dihydroxy-2-naphthoate from chorismate: step 2/7. The protein operates within quinol/quinone metabolism; menaquinone biosynthesis. Its function is as follows. Catalyzes the thiamine diphosphate-dependent decarboxylation of 2-oxoglutarate and the subsequent addition of the resulting succinic semialdehyde-thiamine pyrophosphate anion to isochorismate to yield 2-succinyl-5-enolpyruvyl-6-hydroxy-3-cyclohexene-1-carboxylate (SEPHCHC). The polypeptide is 2-succinyl-5-enolpyruvyl-6-hydroxy-3-cyclohexene-1-carboxylate synthase (Shewanella baltica (strain OS155 / ATCC BAA-1091)).